A 217-amino-acid polypeptide reads, in one-letter code: Cytochrome b5 domain-containing protein 1 (217 aa).

The 67-residue stretch at 6–72 folds into the Cytochrome b5 heme-binding domain; the sequence is PRFYTPREVS…NPKTGDVKTH (67 aa). Heme-binding residues include His-41 and His-72.

It belongs to the cytochrome b5 family.

It localises to the cytoplasm. The protein resides in the cytoskeleton. Its subcellular location is the cilium axoneme. Functionally, radial spoke stalk protein that binds heme under oxidizing conditions. Required for the coordinated beating of multiple cilia maybe by functioning in a redox signaling pathway. This chain is Cytochrome b5 domain-containing protein 1 (cyb5d1), found in Xenopus tropicalis (Western clawed frog).